A 645-amino-acid polypeptide reads, in one-letter code: Acetyl-coenzyme A synthetase (645 aa).

CoA is bound by residues 190 to 193, threonine 309, and asparagine 333; that span reads RGGR. Residues 385-387, 409-414, aspartate 498, and arginine 513 each bind ATP; these read GEP and DTWWQT. Serine 521 contributes to the CoA binding site. Arginine 524 provides a ligand contact to ATP. 3 residues coordinate Mg(2+): valine 535, histidine 537, and valine 540. Arginine 582 serves as a coordination point for CoA. Residue lysine 607 is modified to N6-acetyllysine.

The protein belongs to the ATP-dependent AMP-binding enzyme family. Requires Mg(2+) as cofactor. In terms of processing, acetylated. Deacetylation by the SIR2-homolog deacetylase activates the enzyme.

It catalyses the reaction acetate + ATP + CoA = acetyl-CoA + AMP + diphosphate. In terms of biological role, catalyzes the conversion of acetate into acetyl-CoA (AcCoA), an essential intermediate at the junction of anabolic and catabolic pathways. AcsA undergoes a two-step reaction. In the first half reaction, AcsA combines acetate with ATP to form acetyl-adenylate (AcAMP) intermediate. In the second half reaction, it can then transfer the acetyl group from AcAMP to the sulfhydryl group of CoA, forming the product AcCoA. This Beijerinckia indica subsp. indica (strain ATCC 9039 / DSM 1715 / NCIMB 8712) protein is Acetyl-coenzyme A synthetase.